A 435-amino-acid chain; its full sequence is AP-2 complex subunit mu (435 aa).

Residues 170 to 434 (RNELFLDVLE…IGRSGIYETR (265 aa)) form the MHD domain. Positions 341, 345, and 354 each coordinate a 1,2-diacyl-sn-glycero-3-phospho-(1D-myo-inositol-3,4,5-trisphosphate).

This sequence belongs to the adaptor complexes medium subunit family. In terms of assembly, adaptor protein complex 2 (AP-2) is a heterotetramer composed of two large adaptins (alpha-type subunit and beta-type subunit), a medium adaptin (mu-type subunit) and a small adaptin (sigma-type subunit).

It localises to the cell membrane. The protein resides in the membrane. It is found in the coated pit. Its function is as follows. Component of the adaptor complexes which link clathrin to receptors in coated vesicles. Clathrin-associated protein complexes are believed to interact with the cytoplasmic tails of membrane proteins, leading to their selection and concentration. AP50 is a subunit of the plasma membrane adaptor. The complex binds polyphosphoinositide-containing lipids. This chain is AP-2 complex subunit mu (ap2m1), found in Xenopus tropicalis (Western clawed frog).